The sequence spans 270 residues: Phosphatidate cytidylyltransferase (270 aa).

Transmembrane regions (helical) follow at residues 19–39, 53–73, 76–96, 101–121, 126–146, 183–203, and 248–268; these read LWLTWVGGVGFTLFSIAIGLA, TAFSRLFGWAWLIVTGILLIL, GALLTIGFLVAGCAILLVTQW, GWPAAGLFYAGFSALSLSLLR, FGFTTIVFLFAVVWSTDIAAY, LVASLVAAPGGWGVPVLALLL, and ALLYLFGAIFAEPDVPSAIFF.

Belongs to the CDS family.

It localises to the cell inner membrane. The enzyme catalyses a 1,2-diacyl-sn-glycero-3-phosphate + CTP + H(+) = a CDP-1,2-diacyl-sn-glycerol + diphosphate. It functions in the pathway phospholipid metabolism; CDP-diacylglycerol biosynthesis; CDP-diacylglycerol from sn-glycerol 3-phosphate: step 3/3. This is Phosphatidate cytidylyltransferase (cdsA) from Brucella suis biovar 1 (strain 1330).